The following is a 575-amino-acid chain: Chaperonin 60 subunit alpha 2, chloroplastic (575 aa).

Low complexity predominate over residues 1-18 (MFAVSPSSFSPTTISPRR). The interval 1-27 (MFAVSPSSFSPTTISPRRSGQRNEPRK) is disordered. Residues 1 to 32 (MFAVSPSSFSPTTISPRRSGQRNEPRKFSVVR) constitute a chloroplast transit peptide.

Belongs to the chaperonin (HSP60) family. As to quaternary structure, part of the Cpn60 complex composed of 7 alpha and 7 beta subunits.

The protein resides in the plastid. The protein localises to the chloroplast. In terms of biological role, involved in protein assisted folding. The sequence is that of Chaperonin 60 subunit alpha 2, chloroplastic (CPN60A2) from Arabidopsis thaliana (Mouse-ear cress).